The sequence spans 889 residues: DNA gyrase subunit A (889 aa).

In terms of domain architecture, Topo IIA-type catalytic spans 35–501 (LPDVRDGLKP…GFEDLEDEDL (467 aa)). Tyrosine 123 (O-(5'-phospho-DNA)-tyrosine intermediate) is an active-site residue. Positions 528–534 (QNRGGRG) match the GyrA-box motif. Residues 810 to 889 (VKEDAEDETN…IQQSSDEDEE (80 aa)) form a disordered region. Positions 813-823 (DAEDETNEDEQ) are enriched in acidic residues. Residues 863–875 (DGRIEVRQDFMDR) are compositionally biased toward basic and acidic residues. The span at 876–889 (VEEDIQQSSDEDEE) shows a compositional bias: acidic residues.

The protein belongs to the type II topoisomerase GyrA/ParC subunit family. As to quaternary structure, heterotetramer, composed of two GyrA and two GyrB chains. In the heterotetramer, GyrA contains the active site tyrosine that forms a transient covalent intermediate with DNA, while GyrB binds cofactors and catalyzes ATP hydrolysis.

It localises to the cytoplasm. It catalyses the reaction ATP-dependent breakage, passage and rejoining of double-stranded DNA.. In terms of biological role, a type II topoisomerase that negatively supercoils closed circular double-stranded (ds) DNA in an ATP-dependent manner to modulate DNA topology and maintain chromosomes in an underwound state. Negative supercoiling favors strand separation, and DNA replication, transcription, recombination and repair, all of which involve strand separation. Also able to catalyze the interconversion of other topological isomers of dsDNA rings, including catenanes and knotted rings. Type II topoisomerases break and join 2 DNA strands simultaneously in an ATP-dependent manner. This is DNA gyrase subunit A from Staphylococcus aureus (strain N315).